We begin with the raw amino-acid sequence, 352 residues long: DNA polymerase IV (352 aa).

The 182-residue stretch at 4–185 (IIHVDMDCFF…LPLSKIPGVG (182 aa)) folds into the UmuC domain. 2 residues coordinate Mg(2+): Asp-8 and Asp-103. The active site involves Glu-104.

The protein belongs to the DNA polymerase type-Y family. In terms of assembly, monomer. The cofactor is Mg(2+).

It localises to the cytoplasm. It carries out the reaction DNA(n) + a 2'-deoxyribonucleoside 5'-triphosphate = DNA(n+1) + diphosphate. Poorly processive, error-prone DNA polymerase involved in untargeted mutagenesis. Copies undamaged DNA at stalled replication forks, which arise in vivo from mismatched or misaligned primer ends. These misaligned primers can be extended by PolIV. Exhibits no 3'-5' exonuclease (proofreading) activity. May be involved in translesional synthesis, in conjunction with the beta clamp from PolIII. In Yersinia pseudotuberculosis serotype O:1b (strain IP 31758), this protein is DNA polymerase IV.